A 142-amino-acid polypeptide reads, in one-letter code: U1 small nuclear ribonucleoprotein C (142 aa).

Residues 4–36 (YYCDYCDTFLTHDSPSVRKTHNGGRKHKDNVRM) form a Matrin-type zinc finger.

The protein belongs to the U1 small nuclear ribonucleoprotein C family. As to quaternary structure, U1 snRNP is composed of the 7 core Sm proteins B/B', D1, D2, D3, E, F and G that assemble in a heptameric protein ring on the Sm site of the small nuclear RNA to form the core snRNP, and at least 3 U1 snRNP-specific proteins U1-70K, U1-A and U1-C. U1-C interacts with U1 snRNA and the 5' splice-site region of the pre-mRNA.

It is found in the nucleus. Its function is as follows. Component of the spliceosomal U1 snRNP, which is essential for recognition of the pre-mRNA 5' splice-site and the subsequent assembly of the spliceosome. U1-C is directly involved in initial 5' splice-site recognition for both constitutive and regulated alternative splicing. The interaction with the 5' splice-site seems to precede base-pairing between the pre-mRNA and the U1 snRNA. Stimulates commitment or early (E) complex formation by stabilizing the base pairing of the 5' end of the U1 snRNA and the 5' splice-site region. The sequence is that of U1 small nuclear ribonucleoprotein C from Caenorhabditis briggsae.